Here is a 341-residue protein sequence, read N- to C-terminus: N-acetyl-gamma-glutamyl-phosphate reductase (341 aa).

Residue C147 is part of the active site.

The protein belongs to the NAGSA dehydrogenase family. Type 1 subfamily.

It is found in the cytoplasm. It catalyses the reaction N-acetyl-L-glutamate 5-semialdehyde + phosphate + NADP(+) = N-acetyl-L-glutamyl 5-phosphate + NADPH + H(+). The protein operates within amino-acid biosynthesis; L-arginine biosynthesis; N(2)-acetyl-L-ornithine from L-glutamate: step 3/4. In terms of biological role, catalyzes the NADPH-dependent reduction of N-acetyl-5-glutamyl phosphate to yield N-acetyl-L-glutamate 5-semialdehyde. This chain is N-acetyl-gamma-glutamyl-phosphate reductase, found in Dehalococcoides mccartyi (strain ATCC BAA-2266 / KCTC 15142 / 195) (Dehalococcoides ethenogenes (strain 195)).